Reading from the N-terminus, the 2438-residue chain is MAHMEPIAIVGTACRFAGSSSSPSKLWELLQNPRDVASEPPADRFNIDAFYDPEGSNPMATNARQGVSCAAPQYGSVGVARNNLANRISYFFDWQGPSMSIDTACSASMVALYEAVSALTRHDCNLAAALGANLMLSPQMFIAASNLQMLSPTSRSRMWDAQADGYARGEGVASVLLKRLSDAVADGDPIECVIRAVGVNHDGRSMGFTMPSSDAQVQLIRSTYAKAGLDPRSAEDRPQYVEAHGTGTLAGDPQEASALHQAFFSSSDEDTVLHVGSIKTVVGHAEGTAGLAGLIKASQCIQHGIIPPNLLFNRLNPALEPYARQLRVPVDVVPWPPLSPGVPRRVSVNSFGFGGTNAHVILESYEPAEGLIKVDCNQNAVLPFVFSAESDFSLGSVLEQYSRYLSRNPDVEVHDLAWTLLERRSALMHRVGFWAPDIAHLKRSIQDELAVRKGGAPSTLICRPHGKTRKHILGVFTGQGAQWAQMGLELITTSNTARGWLDELQQSLDALPEPYRPGFSLFQELAADSATSRLSEALLSQTLCTAMQVIWVKMLWALNIHFDAVVGHSSGEIAAGFAAGFLTAEDAIRIAYLRGVFCSAPGSSGEGAMLAAGLSMDEATALCEDVSSSEGRINVAASNSPESVTVSGDRDAILRAEQLLKDRGIFVRLLRVSTAYHSHHMQACSQPYQDALRGCNIQIQTPMSTTTWYSSVYAGRPMEEGSVTETLGTGEYWAENLVSPVLFSQALSAAMSATNPSLIVEVGPHPALKGPALQTLSGITPAEIPYIGVSVRNNSAIESMATAIGAFWAHLGPQAINPRGYLALFQPNTKPSVVRGLPLYPFDHRQEHGYQTRKANGWLYRRNTPHPLLGSLSEDLGEGELRWNHYLSPRRIRWLDGHRVQGQIVVPATAYIVMALEAALALAVVKEKSLHLIRIDDLIIGQAISFQDERDEVETLFHLPPMLENRDDNTAVGRFRCQMAASGGHIKTCAEGILTVTWGSPQDDVLPCPVFPSPAGLADVTDMEEYYASLRTLGYEYTGVFQGIHSLSRKMGIATGQVYNPALTGFLIHPAVLDTGLQGLLAAAGEGQLTTLHVPTRIDTVSVNPAVCSIDSLSFEAAVTRTGADGIVGDVELYTAANGPGAVFFEGVHVSSLVPPSAADDPSVFWVQHWTPLVLDVNRSESRLSPEWMTVLEGYERRAFLALKDILQEVTPELRATFDWHRESVVSWIEHIMEETRMGQRASCKPEWLGQNLENLGHIWGRPDASIEDRMMYRVYQNLLPFLRGEAKMLDALRQDELLTQFYRDEHELRDVNRRLGQLVGDLAVRFPRMKLLEVGAGTGSATREVLKHVSRAYHSYTFTDISVGFFEDMLETLPEHADRLIFQKLDVGQDPLEQGFTENAYDVIIAANVLHATPALHETLRNVRRLLKPGGYLIALEITNIDAIRIGYLMCAFDGWWLGREDGRPWGPVVSASQWDSLLRETGFGGIDSITDRAADELTMYSVFAAQAVDDQITRIREPLTPLPPQPPFCRGVIIGGSPNLVTGVRAIIHPFFSDVEHVSAIENLTEGAPAVVLMVADLSDTPCFQSLTESRLAGLKALVKMAEKTLWVTMGSEAENPFLCLSKGFLTSMNYEHPNVFQYLNIIDPADVQPVVLSEHLLRLAHTTQNNDFTLTSCVHSTELELRLYPGGILKFPRINASNVLNRRYAAARRPVTSPVTDMQESVVVLGQGPDGKLQLLLGEERLLGDRTGVTINVRYSTNRAVRINGAGYLVLVLGQDKVTKTRLVALAGQSASVISTSCYWEIPADISEEQEAAYLYATATALLAASLIQSNGTTILVHGADAILRHAIAIEAASRVVQPIFTTTSPSAASSTGFGKSILVHQNESRRQLAHLLPRYFTAAVNFDSNDHRLFDRMMAIGHQSGVTQEHLLTTLTAVLPRPSASSLPAHPQAVIDALRKAALTAYQLTVQSTAPGHIATSIADIQSCSQELAVADWTPPCGSVPVHLQPASQLVRLSAQKTYLLVGMTGALGQSITQWLIARGARNIVLTSRNPSVDPAWILEMQSTTGARVLVTSMDVTSRASILAVAHALKAGWPPLGGVVNGAMVLWDQLFVDAPLSVLTGQLAPKVQGSLLLDEIFGQEPGLDFFILFGSAIATIGNLGQSAYTAASNFMVALAARRRARGLVASVLQPAQVAGTMGYLRDKDDSFWARMFDMIGRHLVSEPDLHELFAHAILSGRGPPSDVGFGPGEGECVIGGLSVQDPAVYPNILWFRTPKVWPFIHYHHEGTGPSSAATGSVPLVEQLKCATSLAQVGEVVEAGVAAKLHHRLHLPGEVGSGNVTGDTRLTELGVDSLIAVDLRRWFAQELEVDIPVLQMLSGCSVKELAAAATALLQPKFYPGVVGDSDVGSEKDGSSDSRGDTSSSSYQVITPEESD.

The 361-residue stretch at 4–364 folds into the Ketosynthase family 3 (KS3) domain; that stretch reads MEPIAIVGTA…GTNAHVILES (361 aa). Active-site for beta-ketoacyl synthase activity residues include Cys-105, His-244, and His-284. Residues 475–777 are malonyl-CoA:ACP transacylase (MAT) domain; the sequence is VFTGQGAQWA…LKGPALQTLS (303 aa). Ser-569 acts as the For malonyltransferase activity in catalysis. The interval 866 to 1001 is N-terminal hotdog fold; sequence HPLLGSLSED…GILTVTWGSP (136 aa). Residues 866 to 1153 form a dehydratase (DH) domain region; the sequence is HPLLGSLSED…FFEGVHVSSL (288 aa). The PKS/mFAS DH domain occupies 866-1159; sequence HPLLGSLSED…VSSLVPPSAA (294 aa). The Proton acceptor; for dehydratase activity role is filled by His-898. Residues 1018-1159 are C-terminal hotdog fold; that stretch reads ADVTDMEEYY…VSSLVPPSAA (142 aa). Asp-1074 functions as the Proton donor; for dehydratase activity in the catalytic mechanism. The segment at 1297 to 1492 is methyltransferase (CMet) domain; sequence ELLTQFYRDE…TGFGGIDSIT (196 aa). The segment at 2022 to 2193 is ketoreductase (KR) domain; that stretch reads TYLLVGMTGA…ARGLVASVLQ (172 aa). Residues 2318-2396 enclose the Carrier domain; the sequence is EVVEAGVAAK…ELAAAATALL (79 aa). Ser-2356 carries the post-translational modification O-(pantetheine 4'-phosphoryl)serine. The interval 2402–2438 is disordered; the sequence is PGVVGDSDVGSEKDGSSDSRGDTSSSSYQVITPEESD. Residues 2411–2422 show a composition bias toward basic and acidic residues; it reads GSEKDGSSDSRG.

It depends on pantetheine 4'-phosphate as a cofactor.

Its pathway is mycotoxin biosynthesis. In terms of biological role, highly reducing polyketide synthase (HR-PKS); part of the gene cluster that mediates the biosynthesis of citreoviridin, an inhibitor of the of F1-ATPase beta-subunit. The HR-PKS ctvA accepts acetyl-CoA as the starter unit and catalyzes eight iterations of malonyl-CoA extension and four iterations of SAM-dependent methylation at C4, C12, C14, and C16. The KR and DH domains selectively act on the first six iterations to generate the hexaene chain. In the last three iterations, the KR and DH domains terminate their functions to yield a beta,delta-diketo ester moiety, which then undergoes intramolecular cyclization to yield an alpha-pyrone intermediate. Subsequently, ctvB methylates the alpha-pyrone hydroxyl group to generate citreomontanin. In order to form the tetrahydrofuran ring with the correct stereochemistry, the terminal alkenes of citreomontanin need to undergo isomerization to yield a (17Z)-hexaene, a step that could be catalyzed by ctvC. The (17Z)-hexaene then undergoes bisepoxidation by ctvC to form a (17R,16R,15S,14R)-bisepoxide moiety. Lastly, ctvD acts as a regioselective hydrolase to form the tetrahydrofuran ring with the substituents in the correct absolute configuration, completing the biosynthesis of citreoviridin. The chain is Highly reducing polyketide synthase ctvA from Aspergillus terreus (strain NIH 2624 / FGSC A1156).